The primary structure comprises 679 residues: UvrABC system protein B (679 aa).

Residues 25–176 (KGVNTGKEFQ…NLRSYLRSLV (152 aa)) form the Helicase ATP-binding domain. Position 38–45 (38–45 (GATGTGKT)) interacts with ATP. The Beta-hairpin signature appears at 91–114 (YYDYYQPEAYVPVSDTYIAKTASI). In terms of domain architecture, Helicase C-terminal spans 429 to 583 (QIEDLLSEIR…KKYNQVNGIT (155 aa)). Positions 639–674 (PDLIEKLEIKMKDAAKELNFEEAANLRDRIKKLRQK) constitute a UVR domain.

Belongs to the UvrB family. Forms a heterotetramer with UvrA during the search for lesions. Interacts with UvrC in an incision complex.

The protein localises to the cytoplasm. Functionally, the UvrABC repair system catalyzes the recognition and processing of DNA lesions. A damage recognition complex composed of 2 UvrA and 2 UvrB subunits scans DNA for abnormalities. Upon binding of the UvrA(2)B(2) complex to a putative damaged site, the DNA wraps around one UvrB monomer. DNA wrap is dependent on ATP binding by UvrB and probably causes local melting of the DNA helix, facilitating insertion of UvrB beta-hairpin between the DNA strands. Then UvrB probes one DNA strand for the presence of a lesion. If a lesion is found the UvrA subunits dissociate and the UvrB-DNA preincision complex is formed. This complex is subsequently bound by UvrC and the second UvrB is released. If no lesion is found, the DNA wraps around the other UvrB subunit that will check the other stand for damage. The chain is UvrABC system protein B from Prochlorococcus marinus (strain MIT 9301).